We begin with the raw amino-acid sequence, 355 residues long: Protein RecA (355 aa).

73-80 (GPESSGKT) lines the ATP pocket.

This sequence belongs to the RecA family.

The protein resides in the cytoplasm. Can catalyze the hydrolysis of ATP in the presence of single-stranded DNA, the ATP-dependent uptake of single-stranded DNA by duplex DNA, and the ATP-dependent hybridization of homologous single-stranded DNAs. It interacts with LexA causing its activation and leading to its autocatalytic cleavage. The chain is Protein RecA from Solidesulfovibrio magneticus (strain ATCC 700980 / DSM 13731 / RS-1) (Desulfovibrio magneticus).